Reading from the N-terminus, the 232-residue chain is N-acetyltransferase 8B (232 aa).

The Cytoplasmic portion of the chain corresponds to 1–62; it reads MPRFEAQKSS…FLLLLGVPLA (62 aa). The chain crosses the membrane as a helical; Signal-anchor for type II membrane protein span at residues 63-83; it reads LVLVSGSWILAVICIFFLLLL. One can recognise an N-acetyltransferase domain in the interval 79–224; that stretch reads FLLLLLRLLA…WRLVDICFIQ (146 aa). Topologically, residues 84-232 are lumenal; that stretch reads LRLLARQPWK…IQLNYSFPSA (149 aa). Lys109 is subject to N6-acetyllysine.

The protein belongs to the NAT8 family. In terms of processing, acetylation on Lys-109 modulates enzymatic activity. As to expression, expressed in brain (at protein level).

The protein resides in the endoplasmic reticulum-Golgi intermediate compartment membrane. It localises to the endoplasmic reticulum membrane. The enzyme catalyses L-lysyl-[protein] + acetyl-CoA = N(6)-acetyl-L-lysyl-[protein] + CoA + H(+). Endoplasmic reticulum (ER)-membrane-bound lysine N-acetyltransferase catalyzing the N6-acetylation of lysine residues in the lumen of the ER in various proteins, including PROM1 and BACE1, using acetyl-CoA as acetyl donor. Thereby, may regulate apoptosis through the acetylation and the regulation of the expression of PROM1. Acetylates and stabilizes BACE1 immature protein, leading to increased steady-state levels in neurons. By acting on BACE1 expression, may regulate amyloid beta-peptide formation. N(6)-lysine acetylation in ER maintains protein homeostasis and regulates reticulophagy. This is N-acetyltransferase 8B from Mus musculus (Mouse).